The following is a 529-amino-acid chain: Bifunctional purine biosynthesis protein PurH (529 aa).

Residues 1–148 form the MGS-like domain; it reads MQQPRPIRRA…KNHKDVAIVV (148 aa).

The protein belongs to the PurH family.

The enzyme catalyses (6R)-10-formyltetrahydrofolate + 5-amino-1-(5-phospho-beta-D-ribosyl)imidazole-4-carboxamide = 5-formamido-1-(5-phospho-D-ribosyl)imidazole-4-carboxamide + (6S)-5,6,7,8-tetrahydrofolate. The catalysed reaction is IMP + H2O = 5-formamido-1-(5-phospho-D-ribosyl)imidazole-4-carboxamide. The protein operates within purine metabolism; IMP biosynthesis via de novo pathway; 5-formamido-1-(5-phospho-D-ribosyl)imidazole-4-carboxamide from 5-amino-1-(5-phospho-D-ribosyl)imidazole-4-carboxamide (10-formyl THF route): step 1/1. Its pathway is purine metabolism; IMP biosynthesis via de novo pathway; IMP from 5-formamido-1-(5-phospho-D-ribosyl)imidazole-4-carboxamide: step 1/1. The protein is Bifunctional purine biosynthesis protein PurH of Serratia proteamaculans (strain 568).